Consider the following 258-residue polypeptide: UPF0758 protein BamMC406_2419 (258 aa).

Residues 13-42 are disordered; that stretch reads CRDPADAPAAPARHTGPARPRKRRPRNWKP. Residues 31-42 are compositionally biased toward basic residues; that stretch reads RPRKRRPRNWKP. In terms of domain architecture, MPN spans 136–258; it reads QIDSPGAVED…TFSFARAGWL (123 aa). The Zn(2+) site is built by His-207, His-209, and Asp-220. The JAMM motif motif lies at 207-220; the sequence is HNHPSGAVQPSAED.

Belongs to the UPF0758 family.

This Burkholderia ambifaria (strain MC40-6) protein is UPF0758 protein BamMC406_2419.